The chain runs to 207 residues: Ribosomal RNA large subunit methyltransferase E (207 aa).

Positions 61, 63, 81, 97, and 122 each coordinate S-adenosyl-L-methionine. Lysine 162 acts as the Proton acceptor in catalysis.

It belongs to the class I-like SAM-binding methyltransferase superfamily. RNA methyltransferase RlmE family.

It localises to the cytoplasm. It carries out the reaction uridine(2552) in 23S rRNA + S-adenosyl-L-methionine = 2'-O-methyluridine(2552) in 23S rRNA + S-adenosyl-L-homocysteine + H(+). Functionally, specifically methylates the uridine in position 2552 of 23S rRNA at the 2'-O position of the ribose in the fully assembled 50S ribosomal subunit. The chain is Ribosomal RNA large subunit methyltransferase E from Pseudomonas putida (strain ATCC 700007 / DSM 6899 / JCM 31910 / BCRC 17059 / LMG 24140 / F1).